We begin with the raw amino-acid sequence, 92 residues long: Small ribosomal subunit protein uS19 (92 aa).

It belongs to the universal ribosomal protein uS19 family.

Functionally, protein S19 forms a complex with S13 that binds strongly to the 16S ribosomal RNA. The protein is Small ribosomal subunit protein uS19 of Limosilactobacillus reuteri (strain DSM 20016) (Lactobacillus reuteri).